A 180-amino-acid polypeptide reads, in one-letter code: Hypoxanthine-guanine phosphoribosyltransferase (180 aa).

Positions 43 and 44 each coordinate diphosphate. Positions 99 and 100 each coordinate Mg(2+). Catalysis depends on D103, which acts as the Proton acceptor. GMP is bound by residues K131, 152-153, and D159; that span reads FI. Position 165 (R165) interacts with diphosphate.

This sequence belongs to the purine/pyrimidine phosphoribosyltransferase family. The cofactor is Mg(2+).

The protein resides in the cytoplasm. It catalyses the reaction IMP + diphosphate = hypoxanthine + 5-phospho-alpha-D-ribose 1-diphosphate. It carries out the reaction GMP + diphosphate = guanine + 5-phospho-alpha-D-ribose 1-diphosphate. It functions in the pathway purine metabolism; IMP biosynthesis via salvage pathway; IMP from hypoxanthine: step 1/1. Its pathway is purine metabolism; GMP biosynthesis via salvage pathway; GMP from guanine: step 1/1. Purine salvage pathway enzyme that catalyzes the transfer of the ribosyl-5-phosphate group from 5-phospho-alpha-D-ribose 1-diphosphate (PRPP) to the N9 position of the 6-oxopurines hypoxanthine and guanine to form the corresponding ribonucleotides IMP (inosine 5'-monophosphate) and GMP (guanosine 5'-monophosphate), with the release of PPi. This is Hypoxanthine-guanine phosphoribosyltransferase (hpt) from Streptococcus pyogenes serotype M3 (strain ATCC BAA-595 / MGAS315).